Consider the following 64-residue polypeptide: Prokaryotic ubiquitin-like protein Pup (64 aa).

Residues 1 to 35 are disordered; it reads MAQGGQVSAGGGRRDDDEPIEQTSGAGTQQVNVTG. Over residues 21–33 the composition is skewed to polar residues; the sequence is EQTSGAGTQQVNV. Positions 21 to 58 are ARC ATPase binding; the sequence is EQTSGAGTQQVNVTGTDDLLDEIDGLLENNAEEFVRSY. Gln-64 carries the deamidated glutamine modification. An Isoglutamyl lysine isopeptide (Gln-Lys) (interchain with K-? in acceptor proteins) cross-link involves residue Gln-64.

Belongs to the prokaryotic ubiquitin-like protein family. As to quaternary structure, strongly interacts with the proteasome-associated ATPase ARC through a hydrophobic interface; the interacting region of Pup lies in its C-terminal half. There is one Pup binding site per ARC hexamer ring. Is modified by deamidation of its C-terminal glutamine to glutamate by the deamidase Dop, a prerequisite to the subsequent pupylation process.

It functions in the pathway protein degradation; proteasomal Pup-dependent pathway. Its function is as follows. Protein modifier that is covalently attached to lysine residues of substrate proteins, thereby targeting them for proteasomal degradation. The tagging system is termed pupylation. This chain is Prokaryotic ubiquitin-like protein Pup, found in Corynebacterium jeikeium (strain K411).